The chain runs to 555 residues: MQSCESSGDSADDPLSRGLRRRGQPRVVVIGAGLAGLAAAKALLEQGFTDVTVLEASSHIGGRVQSVKLGHATFELGATWIHGSHGNPIYHLAEANGLLEETTDGERSVGRISLYSKNGVACYLTNHGRRIPKDVVEEFSDLYNEVYNLTQEFFRHDKPVNAESQNSVGVFTREEVRNRIRNDPDDPEATKRLKLAMIQQYLKVESCESSSHSMDEVSLSAFGEWTEIPGAHHIIPSGFMRVVELLAEGIPAHVIQLGKPVRCIHWDQASARPRGPEIEPRGEGDHNHDTGEGGQGGEEPRGGRWDEDEQWSVVVECEDCELIPADHVIVTVSLGVLKRQYTSFFRPGLPTEKVAAIHRLGIGTTDKIFLEFEEPFWGPECNSLQFVWEDEAESHTLTYPPELWYRKICGFDVLYPPERYGHVLSGWICGEEALVMEKCDDEAVAEICTEMLRQFTGNPNIPKPRRILRSAWGSNPYFRGSYSYTQVGSSGADVEKLAKPLPYTESSKTAPMQVLFSGEATHRKYYSTTHGALLSGQREAARLIEMYRDLFQQGT.

FAD contacts are provided by residues Ala-35, Glu-55, Arg-63, 79–80 (TW), and Val-261. A disordered region spans residues 271–306 (ARPRGPEIEPRGEGDHNHDTGEGGQGGEEPRGGRWD). Over residues 274–291 (RGPEIEPRGEGDHNHDTG) the composition is skewed to basic and acidic residues. Residues Glu-519 and 528–529 (TT) each bind FAD.

Belongs to the flavin monoamine oxidase family. FAD serves as cofactor. In terms of tissue distribution, widely expressed. Expressed in human tumor cell lines. Isoform 4 is only found in an embryonal kidney cell line.

The protein localises to the cytoplasm. It is found in the nucleus. The enzyme catalyses spermine + O2 + H2O = 3-aminopropanal + spermidine + H2O2. It participates in amine and polyamine degradation; spermine degradation. Inhibited at more than 90% by SL-11144, SL-11150 and SL-11158, at concentrations less than 1 uM. Its function is as follows. Flavoenzyme which catalyzes the oxidation of spermine to spermidine. Can also use N(1)-acetylspermine and spermidine as substrates, with different affinity depending on the isoform (isozyme) and on the experimental conditions. Plays an important role in the regulation of polyamine intracellular concentration and has the potential to act as a determinant of cellular sensitivity to the antitumor polyamine analogs. May contribute to beta-alanine production via aldehyde dehydrogenase conversion of 3-amino-propanal. The polypeptide is Spermine oxidase (SMOX) (Homo sapiens (Human)).